The primary structure comprises 478 residues: Deoxyribodipyrimidine photo-lyase (478 aa).

The Photolyase/cryptochrome alpha/beta domain occupies 2 to 136; sequence NVNLMWFRND…IINCFHDSVL (135 aa). Glu110 serves as a coordination point for (6R)-5,10-methylene-5,6,7,8-tetrahydrofolate. Residues Tyr227 and 239–243 contribute to the FAD site; that span reads TSMLS. Interaction with DNA stretches follow at residues 279-286 and 346-347; these read ELLWREFY and NR. Residue 377-379 coordinates FAD; it reads DGD. DNA is bound at residue Gln409.

Belongs to the DNA photolyase class-1 family. In terms of assembly, monomer. FAD is required as a cofactor. The cofactor is (6R)-5,10-methylene-5,6,7,8-tetrahydrofolate.

The catalysed reaction is cyclobutadipyrimidine (in DNA) = 2 pyrimidine residues (in DNA).. Its function is as follows. Involved in repair of UV radiation-induced DNA damage. Catalyzes the light-dependent monomerization (300-600 nm) of cyclobutyl pyrimidine dimers (in cis-syn configuration), which are formed between adjacent bases on the same DNA strand upon exposure to ultraviolet radiation. This Buchnera aphidicola subsp. Baizongia pistaciae (strain Bp) protein is Deoxyribodipyrimidine photo-lyase (phrB).